Reading from the N-terminus, the 695-residue chain is Probable serine/threonine-protein kinase DDB_G0279405 (695 aa).

Disordered stretches follow at residues 119 to 138 and 149 to 192; these read IVAQ…PQPQ and QIPT…KRHK. Residues 124–138 show a composition bias toward pro residues; that stretch reads QPQPQPQPQPQPQPQ. Over residues 149–160 the composition is skewed to low complexity; that stretch reads QIPTTPPQQISQ. The segment covering 161 to 173 has biased composition (polar residues); the sequence is FNITGNKSPSSIG. In terms of domain architecture, Protein kinase spans 201 to 462; it reads YVFVRKLGKG…IAEIKSHKWT (262 aa). ATP is bound by residues 207–215 and K230; that span reads LGKGTFGKV. The active-site Proton acceptor is D329. A disordered region spans residues 491–580; sequence TDHTIKPSDN…NQNQNNNNNS (90 aa). Low complexity predominate over residues 510 to 528; that stretch reads LSSSSGGESSGIIGSSNES. The span at 529 to 541 shows a compositional bias: polar residues; that stretch reads KSMYNNVNSKQKI. The segment covering 542–580 has biased composition (low complexity); the sequence is QNQNQNQNQNQNQNQNQNQNQNHNQNQNQNQNQNNNNNS.

The protein belongs to the protein kinase superfamily. Ser/Thr protein kinase family.

The enzyme catalyses L-seryl-[protein] + ATP = O-phospho-L-seryl-[protein] + ADP + H(+). It carries out the reaction L-threonyl-[protein] + ATP = O-phospho-L-threonyl-[protein] + ADP + H(+). This is Probable serine/threonine-protein kinase DDB_G0279405 from Dictyostelium discoideum (Social amoeba).